Consider the following 634-residue polypeptide: SPARC-like protein 1 (634 aa).

The signal sequence occupies residues 1–16 (MKAVLLLLYALGIAAA). The interval 50–335 (ADIEKHPNHK…DDSKHGASDD (286 aa)) is disordered. Residues 51 to 62 (DIEKHPNHKAEK) are compositionally biased toward basic and acidic residues. A phosphoserine mark is found at S68, S76, and S84. A compositionally biased stretch (basic and acidic residues) spans 73–83 (HEQSTEQDKTY). A compositionally biased stretch (acidic residues) spans 89–99 (LKDEEDGDGDL). Residues 131–144 (TVSTPFVDSDQPAN) are compositionally biased toward polar residues. N-linked (GlcNAc...) asparagine glycosylation is present at N144. 2 positions are modified to phosphoserine: S151 and S159. Acidic residues-rich tracts occupy residues 189 to 198 (EKEEEEDPED) and 205 to 214 (NQEEEKEPPE). The span at 233-258 (QESSQPTQISKTKNDFEQGSQGQEGD) shows a compositional bias: polar residues. Position 259 is a phosphoserine (S259). Basic and acidic residues-rich tracts occupy residues 263-276 (GEDK…HLPH) and 292-303 (GNRKDTDEEKAV). Phosphoserine occurs at positions 333 and 340. The interval 360-398 (EETPDESENRSEAGDNQGAKKAESSPNAEPSDEGNSRGH) is disordered. A compositionally biased stretch (basic and acidic residues) spans 366 to 382 (SENRSEAGDNQGAKKAE). N368 carries N-linked (GlcNAc...) asparagine glycosylation. Phosphoserine is present on residues S370 and S390. Positions 402–424 (SCMNFQCKRGHTCKTDQHGKPHC) constitute a Follistatin-like domain. Cystine bridges form between C403/C414, C408/C424, C426/C460, C432/C453, C442/C479, C485/C596, and C604/C620. In terms of domain architecture, Kazal-like spans 420 to 481 (GKPHCVCQDP…QLDYFGACKS (62 aa)). N446 is a glycosylation site (N-linked (GlcNAc...) asparagine). Positions 592 to 627 (PMEHCITRFFEECDPNKDKHITLKEWGHCFGIKEED) constitute an EF-hand domain. 5 residues coordinate Ca(2+): D605, N607, D609, H611, and E616.

Belongs to the SPARC family. As to expression, expressed in many types of neurons in the brain.

The protein localises to the secreted. It localises to the extracellular space. It is found in the extracellular matrix. The chain is SPARC-like protein 1 (Sparcl1) from Rattus norvegicus (Rat).